The following is a 580-amino-acid chain: High affinity choline transporter 1 (580 aa).

The Extracellular portion of the chain corresponds to 1–6; it reads MAFHVE. The chain crosses the membrane as a helical span at residues 7-27; that stretch reads GLIAIIVFYLLILLVGIWAAW. Residues 28–48 lie on the Cytoplasmic side of the membrane; the sequence is RTKNSGSAEERSEAIIVGGRD. Residues 49-69 form a helical membrane-spanning segment; it reads IGLLVGGFTMTATWVGGGYIN. At 70 to 81 the chain is on the extracellular side; sequence GTAEAVYVPGYG. Residues 82–102 traverse the membrane as a helical segment; it reads LAWAQAPIGYSLSLILGGLFF. Over 103 to 125 the chain is Cytoplasmic; the sequence is AKPMRSKGYVTMLDPFQQIYGKR. A helical membrane pass occupies residues 126–146; that stretch reads MGGLLFIPALMGEMFWAAAIF. The Extracellular segment spans residues 147–164; that stretch reads SALGATISVIIDVDMHIS. Residues 165-185 form a helical membrane-spanning segment; the sequence is VIISALIATLYTLVGGLYSVA. Residues 186–191 are Cytoplasmic-facing; it reads YTDVVQ. The chain crosses the membrane as a helical span at residues 192–212; the sequence is LFCIFVGLWISVPFALSHPAV. Over 213–237 the chain is Extracellular; the sequence is ADIGFTAVHAKYQKPWLGTVDSSEV. A helical transmembrane segment spans residues 238–258; the sequence is YSWLDSFLLLMLGGIPWQAYF. At 259–274 the chain is on the cytoplasmic side; it reads QRVLSSSSATYAQVLS. A helical membrane pass occupies residues 275 to 295; it reads FLAAFGCLVMAIPAILIGAIG. The Extracellular segment spans residues 296–317; it reads ASTDWNQTAYGLPDPKTTEEAD. Asn301 is a glycosylation site (N-linked (GlcNAc...) asparagine). A helical transmembrane segment spans residues 318 to 338; it reads MILPIVLQYLCPVYISFFGLG. Residues 339–376 are Cytoplasmic-facing; it reads AVSAAVMSSADSSILSASSMFARNIYQLSFRQNASDKE. Residues 377 to 397 form a helical membrane-spanning segment; that stretch reads IVWVMRITVFVFGASATAMAL. Residues 398 to 406 are Extracellular-facing; the sequence is LTKTVYGLW. The helical transmembrane segment at 407–427 threads the bilayer; it reads YLSSDLVYIVIFPQLLCVLFV. Topologically, residues 428–435 are cytoplasmic; sequence KGTNTYGA. A helical transmembrane segment spans residues 436–456; sequence VAGYVSGLFLRITGGEPYLYL. Over 457–481 the chain is Extracellular; it reads QPLIFYPGYYPDDNGIYNQKFPFKT. The chain crosses the membrane as a helical span at residues 482-502; sequence LAMVTSFLTNICISYLAKYLF. The tract at residues 502–580 is mediates interaction with SEC14L1; sequence FESGTLPPKL…EGSGTEDNLQ (79 aa). Residues 503-580 are Cytoplasmic-facing; it reads ESGTLPPKLD…EGSGTEDNLQ (78 aa). The Dileucine-like motif motif lies at 527 to 532; it reads DKTILV.

Belongs to the sodium:solute symporter (SSF) (TC 2.A.21) family. As to quaternary structure, homooligomerizes at cell surface. Interacts with SEC14L1; may regulate SLC5A7. In terms of processing, phosphorylated. In terms of tissue distribution, expressed in putamen, spinal cord and medulla. Expressed in cholinergic neurons.

The protein localises to the presynaptic cell membrane. It localises to the cell projection. It is found in the axon. Its subcellular location is the early endosome membrane. The protein resides in the cytoplasmic vesicle. The protein localises to the secretory vesicle. It localises to the synaptic vesicle membrane. The catalysed reaction is choline(out) + n Na(+)(out) = choline(in) + n Na(+)(in). Choline uptake activity is regulated by SLC5A7/CHT1 internalization (inactive form) from the cell surface and recycling of internalized SLC5A7/CHT1 into the cell surface (active form). Activated by extracellular chloride ion. Specifically inhibited by nanomolar concentrations of hemicholinium 3. In terms of biological role, high-affinity Na(+)-coupled choline transmembrane symporter. Functions as an electrogenic, voltage-dependent transporter with variable charge/choline stoichiometry. Choline uptake and choline-induced current is also Cl(-)-dependent where Cl(-) is likely a regulatory ion rather than cotransported ion. Plays a critical role in acetylcholine (ACh) synthesis by taking up the substrate choline from the synaptic cleft into the presynaptic nerve terminals after neurotransmitter release. SLC5A7/CHT1-mediated choline high-affinity transport in cholinergic neurons is the rate-limiting step for production of ACh, thereby facilitating communication by subsequent action potentials. Localized predominantly in presynaptic terminal intracellular organelles, and translocated to the plasma membrane in active form in response to neuronal activity. The protein is High affinity choline transporter 1 of Homo sapiens (Human).